Reading from the N-terminus, the 134-residue chain is Early E3B 14.5 kDa protein (134 aa).

An N-terminal signal peptide occupies residues 1-21 (MQAMLPVILILLLPCIPLAST). A helical membrane pass occupies residues 54 to 78 (YWIVIVGIINILSCTFFSITIYPTF).

This sequence belongs to the adenoviridae E3_14 family. Post-translationally, phosphorylated on serine; O-glycosylated, but not N-glycosylated.

It localises to the host membrane. Down-regulates the EGF receptor and prevents cytolysis by TNF. In Homo sapiens (Human), this protein is Early E3B 14.5 kDa protein.